Consider the following 37-residue polypeptide: Large ribosomal subunit protein bL36A (37 aa).

The protein belongs to the bacterial ribosomal protein bL36 family.

In Methylobacillus flagellatus (strain ATCC 51484 / DSM 6875 / VKM B-1610 / KT), this protein is Large ribosomal subunit protein bL36A.